We begin with the raw amino-acid sequence, 557 residues long: MAKYIFVTGGVASSVGKGITVASIGRLLKARGVRVSVQKLDPYINVDPGTMSPYQHGEVFVTEDGAETDLDLGHYERFIDVNLTRLSNVTTGQIYSAVIQKERRGDYLGGTIQVIPHITNEIKSRIAAVARQTGADVVIVEIGGTVGDIEGLPFLEAIRQMRKDVGRDNVLYIHVTLLPHIGATGEVKTKPTQHSVMELRRVGITADVIVCRSDYPITDEIRDKIALFADVDVEAVVPLHTVDSIYEVPLVLEEAGLGAYLTQRLGLSASRPDLDDWRDLVARIKAPKRKLAIALVGKYVELHDAYISVVEALRHAGLHQGVDVDIRWISSEQIEEEGCEPLLHDVYGIVVPGGFGDRGIEGKIAAAEYARVNNVPYLGLCLGMQVATISFARHIMGPESRANSTEFDLHTPHPVIDFMPDQLDITDKGGTMRLGGYPCKLTPGTRAYAAYGVDVVVERHRHRFEFNNKYRRLFESAGMIVSGQSPDGRLVEIIELRNHPWYVGTQFHPEFQSRPDRPHPLFRDFVAAAAKTFREGDQRPLPLEQNGAVTEHEPHSR.

The amidoligase domain stretch occupies residues 1–267 (MAKYIFVTGG…GAYLTQRLGL (267 aa)). Serine 13 provides a ligand contact to CTP. Residue serine 13 coordinates UTP. 14–19 (SVGKGI) provides a ligand contact to ATP. Tyrosine 54 is a binding site for L-glutamine. Aspartate 71 contacts ATP. Residues aspartate 71 and glutamate 141 each coordinate Mg(2+). Residues 148-150 (DIE), 188-193 (KTKPTQ), and lysine 224 contribute to the CTP site. UTP-binding positions include 188–193 (KTKPTQ) and lysine 224. Residues 292–535 (AIALVGKYVE…VAAAAKTFRE (244 aa)) form the Glutamine amidotransferase type-1 domain. Residue glycine 354 participates in L-glutamine binding. Cysteine 381 (nucleophile; for glutamine hydrolysis) is an active-site residue. L-glutamine is bound by residues 382–385 (LGMQ), glutamate 406, and arginine 463. Active-site residues include histidine 508 and glutamate 510. A disordered region spans residues 536 to 557 (GDQRPLPLEQNGAVTEHEPHSR).

This sequence belongs to the CTP synthase family. In terms of assembly, homotetramer.

The catalysed reaction is UTP + L-glutamine + ATP + H2O = CTP + L-glutamate + ADP + phosphate + 2 H(+). It carries out the reaction L-glutamine + H2O = L-glutamate + NH4(+). It catalyses the reaction UTP + NH4(+) + ATP = CTP + ADP + phosphate + 2 H(+). It participates in pyrimidine metabolism; CTP biosynthesis via de novo pathway; CTP from UDP: step 2/2. Its activity is regulated as follows. Allosterically activated by GTP, when glutamine is the substrate; GTP has no effect on the reaction when ammonia is the substrate. The allosteric effector GTP functions by stabilizing the protein conformation that binds the tetrahedral intermediate(s) formed during glutamine hydrolysis. Inhibited by the product CTP, via allosteric rather than competitive inhibition. In terms of biological role, catalyzes the ATP-dependent amination of UTP to CTP with either L-glutamine or ammonia as the source of nitrogen. Regulates intracellular CTP levels through interactions with the four ribonucleotide triphosphates. The sequence is that of CTP synthase from Roseiflexus sp. (strain RS-1).